The sequence spans 433 residues: Glutamate-1-semialdehyde 2,1-aminomutase (433 aa).

K266 bears the N6-(pyridoxal phosphate)lysine mark.

Belongs to the class-III pyridoxal-phosphate-dependent aminotransferase family. HemL subfamily. As to quaternary structure, homodimer. Requires pyridoxal 5'-phosphate as cofactor.

The protein resides in the cytoplasm. The enzyme catalyses (S)-4-amino-5-oxopentanoate = 5-aminolevulinate. It participates in porphyrin-containing compound metabolism; protoporphyrin-IX biosynthesis; 5-aminolevulinate from L-glutamyl-tRNA(Glu): step 2/2. This is Glutamate-1-semialdehyde 2,1-aminomutase from Psychrobacter cryohalolentis (strain ATCC BAA-1226 / DSM 17306 / VKM B-2378 / K5).